Consider the following 118-residue polypeptide: Probable non-functional immunoglobulin lambda variable 1-50 (118 aa).

Residues 1-19 (MAWSSLLLTLLAHCTGSWA) form the signal peptide. Positions 20-44 (QSVLTQPPSVSGAPGQRVTISCTGS) are framework-1. Residues 20–118 (QSVLTQPPSV…CKAWDNSLNA (99 aa)) enclose the Ig-like domain. Residues Cys41 and Cys109 are joined by a disulfide bond. The tract at residues 45–53 (SSNIGAGYV) is complementarity-determining-1. Positions 54-70 (VHWYQQLPGTAPKLLIY) are framework-2. The interval 71–73 (GNS) is complementarity-determining-2. The tract at residues 74–109 (NRPSGVPDQFSGSKSGTSASLAITGLQSEDEADYYC) is framework-3. Residues 110 to 118 (KAWDNSLNA) are complementarity-determining-3.

In terms of assembly, immunoglobulins are composed of two identical heavy chains and two identical light chains; disulfide-linked.

It is found in the secreted. The protein resides in the cell membrane. Functionally, probable non-functional open reading frame (ORF) of V region of the variable domain of immunoglobulin light chains. Non-functional ORF generally cannot participate in the synthesis of a productive immunoglobulin chain due to altered V-(D)-J or switch recombination and/or splicing site (at mRNA level) and/or conserved amino acid change (protein level). Immunoglobulins, also known as antibodies, are membrane-bound or secreted glycoproteins produced by B lymphocytes. In the recognition phase of humoral immunity, the membrane-bound immunoglobulins serve as receptors which, upon binding of a specific antigen, trigger the clonal expansion and differentiation of B lymphocytes into immunoglobulins-secreting plasma cells. Secreted immunoglobulins mediate the effector phase of humoral immunity, which results in the elimination of bound antigens. The antigen binding site is formed by the variable domain of one heavy chain, together with that of its associated light chain. Thus, each immunoglobulin has two antigen binding sites with remarkable affinity for a particular antigen. The variable domains are assembled by a process called V-(D)-J rearrangement and can then be subjected to somatic hypermutations which, after exposure to antigen and selection, allow affinity maturation for a particular antigen. The polypeptide is Probable non-functional immunoglobulin lambda variable 1-50 (Homo sapiens (Human)).